The chain runs to 232 residues: Clarin-2 (232 aa).

Residues 10-30 (YGLASLLSFSSFILIIVALVV) traverse the membrane as a helical segment. N48 is a glycosylation site (N-linked (GlcNAc...) asparagine). 3 helical membrane-spanning segments follow: residues 101–121 (ILLL…FAIL), 139–159 (LWNV…VAAV), and 188–208 (SFWI…VVAI).

It belongs to the clarin family.

Its subcellular location is the cell projection. The protein resides in the stereocilium membrane. In terms of biological role, plays a key role to hearing function. Required for normal organization and maintenance of the stereocilia bundle and for mechano-electrical transduction. This Homo sapiens (Human) protein is Clarin-2.